A 445-amino-acid polypeptide reads, in one-letter code: GTPase Der (445 aa).

2 consecutive EngA-type G domains span residues 3 to 167 (PVIA…YADQ) and 180 to 353 (IKIA…AAAM). GTP-binding positions include 9–16 (GRPNVGKS), 56–60 (DTGGF), 119–122 (NKAE), 186–193 (GRPNVGKS), 233–237 (DTAGL), and 298–301 (NKWD). A KH-like domain is found at 354–438 (AKLPTPKLTR…PLRIEFRSST (85 aa)).

Belongs to the TRAFAC class TrmE-Era-EngA-EngB-Septin-like GTPase superfamily. EngA (Der) GTPase family. In terms of assembly, associates with the 50S ribosomal subunit.

GTPase that plays an essential role in the late steps of ribosome biogenesis. The sequence is that of GTPase Der from Burkholderia multivorans (strain ATCC 17616 / 249).